Consider the following 510-residue polypeptide: Cytochrome P450 94B1 (510 aa).

A helical transmembrane segment spans residues 3-23; it reads MLNAIILILFPIIGFVLIFSF. Residue C450 coordinates heme.

This sequence belongs to the cytochrome P450 family. Heme serves as cofactor.

It is found in the membrane. It catalyses the reaction a jasmonyl-L-amino acid + reduced [NADPH--hemoprotein reductase] + O2 = a 12-hydroxyjasmonyl-L-alpha-amino acid + oxidized [NADPH--hemoprotein reductase] + H2O + H(+). Hydroxylase involved in the oxidation of the plant hormone jasmonoyl-L-isoleucine (JA-Ile), a bioactive phytohormone of the jasmonate-mediated signaling pathway. Converts JA-Ile to 12-hydroxy-JA-Ile. The chain is Cytochrome P450 94B1 from Arabidopsis thaliana (Mouse-ear cress).